The primary structure comprises 74 residues: Small ribosomal subunit protein bS18 (74 aa).

This sequence belongs to the bacterial ribosomal protein bS18 family. Part of the 30S ribosomal subunit. Forms a tight heterodimer with protein bS6.

Functionally, binds as a heterodimer with protein bS6 to the central domain of the 16S rRNA, where it helps stabilize the platform of the 30S subunit. The chain is Small ribosomal subunit protein bS18 from Rhizorhabdus wittichii (strain DSM 6014 / CCUG 31198 / JCM 15750 / NBRC 105917 / EY 4224 / RW1) (Sphingomonas wittichii).